Consider the following 116-residue polypeptide: Non-specific lipid-transfer protein (116 aa).

The first 25 residues, Met1–Ala25, serve as a signal peptide directing secretion. 4 disulfide bridges follow: Cys28/Cys75, Cys38/Cys52, Cys53/Cys98, and Cys73/Cys112.

Belongs to the plant LTP family.

In terms of biological role, plant non-specific lipid-transfer proteins transfer phospholipids as well as galactolipids across membranes. May play a role in wax or cutin deposition in the cell walls of expanding epidermal cells and certain secretory tissues. The sequence is that of Non-specific lipid-transfer protein from Helianthus annuus (Common sunflower).